We begin with the raw amino-acid sequence, 271 residues long: 5'-AMP-activated protein kinase subunit beta-2 (271 aa).

The interval 1-47 (MGNTTSERVSGERHGAKAARAEGGGHGPGKEHKIMVGSTDDPSVFSL) is disordered. A Phosphoserine; by ULK1 modification is found at Ser-38. Thr-39 bears the Phosphothreonine; by ULK1 mark. Ser-68 carries the post-translational modification Phosphoserine; by ULK1. Phosphoserine occurs at positions 94 and 107. Phosphothreonine is present on Thr-147. Residues Ser-157 and Ser-169 each carry the phosphoserine modification. A Phosphoserine; by ULK1 modification is found at Ser-173. Ser-183 carries the post-translational modification Phosphoserine.

This sequence belongs to the 5'-AMP-activated protein kinase beta subunit family. AMPK is a heterotrimer of an alpha catalytic subunit (PRKAA1 or PRKAA2), a beta (PRKAB1 or PRKAB2) and a gamma non-catalytic subunits (PRKAG1, PRKAG2 or PRKAG3). Phosphorylated when associated with the catalytic subunit (PRKAA1 or PRKAA2). Phosphorylated by ULK1 and ULK2; leading to negatively regulate AMPK activity and suggesting the existence of a regulatory feedback loop between ULK1, ULK2 and AMPK.

In terms of biological role, non-catalytic subunit of AMP-activated protein kinase (AMPK), an energy sensor protein kinase that plays a key role in regulating cellular energy metabolism. In response to reduction of intracellular ATP levels, AMPK activates energy-producing pathways and inhibits energy-consuming processes: inhibits protein, carbohydrate and lipid biosynthesis, as well as cell growth and proliferation. AMPK acts via direct phosphorylation of metabolic enzymes, and by longer-term effects via phosphorylation of transcription regulators. Also acts as a regulator of cellular polarity by remodeling the actin cytoskeleton; probably by indirectly activating myosin. Beta non-catalytic subunit acts as a scaffold on which the AMPK complex assembles, via its C-terminus that bridges alpha (PRKAA1 or PRKAA2) and gamma subunits (PRKAG1, PRKAG2 or PRKAG3). The sequence is that of 5'-AMP-activated protein kinase subunit beta-2 (Prkab2) from Rattus norvegicus (Rat).